Here is a 428-residue protein sequence, read N- to C-terminus: Immunoglobulin superfamily member 11 (428 aa).

The signal sequence occupies residues 1-22 (MTRRRSALASWLLLSLLGVAAS). The Ig-like V-type domain occupies 23 to 136 (LEVSESPGSV…DRGGRNIGVT (114 aa)). Residues 23–239 (LEVSESPGSV…LQVISPQPRS (217 aa)) lie on the Extracellular side of the membrane. 2 cysteine pairs are disulfide-bonded: C44–C120 and C165–C215. The N-linked (GlcNAc...) asparagine glycan is linked to N102. One can recognise an Ig-like C2-type domain in the interval 144–234 (PSAPNCQIQG…TCLLDLQVIS (91 aa)). The chain crosses the membrane as a helical span at residues 240-260 (VGVIAGAVGTGAVLIVICLAL). Residues 261–428 (TSGAFFYWRS…PAQSRAGSLV (168 aa)) are Cytoplasmic-facing. R375 carries the post-translational modification Omega-N-methylarginine.

Post-translationally, N-glycosylated.

It localises to the cell membrane. In terms of biological role, functions as a cell adhesion molecule through homophilic interaction. Stimulates cell growth. The polypeptide is Immunoglobulin superfamily member 11 (Igsf11) (Rattus norvegicus (Rat)).